The primary structure comprises 310 residues: Probable cobalamin biosynthesis protein CobD (310 aa).

A run of 5 helical transmembrane segments spans residues 53–73, 80–100, 157–177, 215–235, and 289–309; these read LVFGFITVFLTVFTVFLIFFT, LISNYYIKLFSYSLILSFSIG, DSIIAPLIYAAIFGLSGAFIY, IAGILLIISAPFYGGKIVPAI, and AVDYSVLLFLVIYMVLYFNLI.

The protein belongs to the CobD/CbiB family.

The protein localises to the cell membrane. It functions in the pathway cofactor biosynthesis; adenosylcobalamin biosynthesis. Its function is as follows. Converts cobyric acid to cobinamide by the addition of aminopropanol on the F carboxylic group. In Methanococcus vannielii (strain ATCC 35089 / DSM 1224 / JCM 13029 / OCM 148 / SB), this protein is Probable cobalamin biosynthesis protein CobD.